A 102-amino-acid chain; its full sequence is NADH-quinone oxidoreductase subunit K 1 (102 aa).

The next 3 helical transmembrane spans lie at 5–25, 31–51, and 65–85; these read LSHY…GIFL, IVIL…MVAF, and LFIL…LVVF.

It belongs to the complex I subunit 4L family. In terms of assembly, NDH-1 is composed of 14 different subunits. Subunits NuoA, H, J, K, L, M, N constitute the membrane sector of the complex.

Its subcellular location is the cell inner membrane. It catalyses the reaction a quinone + NADH + 5 H(+)(in) = a quinol + NAD(+) + 4 H(+)(out). In terms of biological role, NDH-1 shuttles electrons from NADH, via FMN and iron-sulfur (Fe-S) centers, to quinones in the respiratory chain. The immediate electron acceptor for the enzyme in this species is believed to be ubiquinone. Couples the redox reaction to proton translocation (for every two electrons transferred, four hydrogen ions are translocated across the cytoplasmic membrane), and thus conserves the redox energy in a proton gradient. This is NADH-quinone oxidoreductase subunit K 1 from Rhizobium etli (strain CIAT 652).